The primary structure comprises 122 residues: Large ribosomal subunit protein uL14 (122 aa).

This sequence belongs to the universal ribosomal protein uL14 family. As to quaternary structure, part of the 50S ribosomal subunit. Forms a cluster with proteins L3 and L19. In the 70S ribosome, L14 and L19 interact and together make contacts with the 16S rRNA in bridges B5 and B8.

Functionally, binds to 23S rRNA. Forms part of two intersubunit bridges in the 70S ribosome. In Christiangramia forsetii (strain DSM 17595 / CGMCC 1.15422 / KT0803) (Gramella forsetii), this protein is Large ribosomal subunit protein uL14.